The primary structure comprises 330 residues: Tryptophan--tRNA ligase (330 aa).

ATP contacts are provided by residues 6 to 8 and 14 to 15; these read QPT and GN. Residues 7–15 carry the 'HIGH' region motif; it reads PTGSLHLGN. Aspartate 130 serves as a coordination point for L-tryptophan. ATP contacts are provided by residues 142–144, valine 185, and 194–198; these read GED and KMSKS. The 'KMSKS' region motif lies at 194–198; the sequence is KMSKS.

This sequence belongs to the class-I aminoacyl-tRNA synthetase family. As to quaternary structure, homodimer.

Its subcellular location is the cytoplasm. The enzyme catalyses tRNA(Trp) + L-tryptophan + ATP = L-tryptophyl-tRNA(Trp) + AMP + diphosphate + H(+). In terms of biological role, catalyzes the attachment of tryptophan to tRNA(Trp). This Thermosynechococcus vestitus (strain NIES-2133 / IAM M-273 / BP-1) protein is Tryptophan--tRNA ligase.